The chain runs to 354 residues: MEKRIVCLAGDGVGPEVMESAKEVLHMVERLYGHHFHLQDEYFGGVAIDLTGQPLPQRTLAACLASDAVLLGAVGGPRWDSAKERPEKGLLALRKGLGVFANVRPVTVESATAHLSPLKNADEIDFVVVRELTGGIYFSYPKERTEEVATDTLTYHRHEIERIVSYAFQLANKRKKKVTSIDKANVLESSKLWRTVTEEVALRYPNVEVEHILVDAAAMELIRNPGRFDVIVTENLFGDILSDEASVLAGSLGMLPSASHAEKGPSLYEPIHGSAPDIAGKNKANPIAMMRSVAMMLGQSFGLTREGYAIEEAVSAVLKSGKCTADIGGTETTTSFTKAVIQEMEEQALVGRGR.

76–87 (GPRWDSAKERPE) contributes to the NAD(+) binding site. Residues R94, R104, R130, and D215 each coordinate substrate. The Mg(2+) site is built by D215, D239, and D243. Residue 273–285 (GSAPDIAGKNKAN) participates in NAD(+) binding.

It belongs to the isocitrate and isopropylmalate dehydrogenases family. LeuB type 1 subfamily. In terms of assembly, homodimer. The cofactor is Mg(2+). Requires Mn(2+) as cofactor.

The protein resides in the cytoplasm. The enzyme catalyses (2R,3S)-3-isopropylmalate + NAD(+) = 4-methyl-2-oxopentanoate + CO2 + NADH. It participates in amino-acid biosynthesis; L-leucine biosynthesis; L-leucine from 3-methyl-2-oxobutanoate: step 3/4. In terms of biological role, catalyzes the oxidation of 3-carboxy-2-hydroxy-4-methylpentanoate (3-isopropylmalate) to 3-carboxy-4-methyl-2-oxopentanoate. The product decarboxylates to 4-methyl-2 oxopentanoate. The protein is 3-isopropylmalate dehydrogenase of Bacillus cereus (strain ATCC 14579 / DSM 31 / CCUG 7414 / JCM 2152 / NBRC 15305 / NCIMB 9373 / NCTC 2599 / NRRL B-3711).